A 591-amino-acid polypeptide reads, in one-letter code: Acyl-CoA-dependent acyltransferase MAC1 (591 aa).

Residues 589–591 form a peroxisomal targeting signal type 1 region; that stretch reads ARL.

Belongs to the trichothecene O-acetyltransferase family.

Its subcellular location is the peroxisome. It participates in secondary metabolite biosynthesis. In terms of biological role, acyl-CoA-dependent acyltransferase; part of the gene cluster that mediates the biosynthesis of mannosylerythritol lipids (MELs), surface-active substances that enhance the availability of water-insoluble substrates. Mannosylerythritol lipid production is responsible for hemolytic activity of Ustilago maydis. Depending on the number of acetyl groups, mannosylerythritol lipids can be differentiated into MEL A (fully acetylated), MEL B and MEL C (monoacetylated at R-6 and R-4, respectively), and the fully deacetylated MEL D. The first step in the pathway is the generation of mannosylerythritol by the glycosyltransferase EMT1 which catalyzes the transfer of GDP-mannose to the C-4 atom of meso-erythritol. This reaction has to be stereospecific, since only mannosyl-D-erythritol is generated. The produced disaccharide is subsequently acylated with fatty acids of various lengths derived from the peroxisomal beta-oxidation by the peroxisomal acyltransferases MAC1 and MAC2 at positions C-2 and C-3, repectively. The existence of MEL derivatives which carry an acetyl group at C-2 implies that at least MAC1 also accepts acetyl-CoA as a donor. The final step of MEL biosynthesis is the acetylation of the fully acylated mannosylerythritol lipids catalyzed by the acetyl-CoA-dependent acetyltransferase MAT1. MAT1 displays a relaxed regioselectivity and is able to transfer acetylgroups to both positions C-4 and C-6 of the mannosyl moiety. This chain is Acyl-CoA-dependent acyltransferase MAC1, found in Mycosarcoma maydis (Corn smut fungus).